A 228-amino-acid polypeptide reads, in one-letter code: HTH-type transcriptional regulator TfdT (228 aa).

Positions M1–T58 constitute an HTH lysR-type domain. The H-T-H motif DNA-binding region spans F18–Q37.

Belongs to the LysR transcriptional regulatory family.

It localises to the cytoplasm. Its function is as follows. Does not seem to be involved in the regulation of 3-chlorocatechol degradation. Does not activate the expression of its presumed target operon, tfdCDEF. This Cupriavidus pinatubonensis (strain JMP 134 / LMG 1197) (Cupriavidus necator (strain JMP 134)) protein is HTH-type transcriptional regulator TfdT (tfdT).